A 337-amino-acid polypeptide reads, in one-letter code: Adenylosuccinate synthetase (337 aa).

GTP is bound by residues 12-18 and 42-44; these read GDEGKGK and GHT. The active-site Proton acceptor is the aspartate 13. 2 residues coordinate Mg(2+): aspartate 13 and glycine 42. IMP contacts are provided by residues 13–16, 40–43, threonine 124, arginine 138, glutamine 176, threonine 191, and arginine 253; these read DEGK and NAGH. Histidine 43 functions as the Proton donor in the catalytic mechanism. A substrate-binding site is contributed by 249–255; it reads TVTGRRR. GTP is bound by residues arginine 255, 281-283, and 321-323; these read GVD and STG.

It belongs to the adenylosuccinate synthetase family. In terms of assembly, homodimer. Mg(2+) serves as cofactor.

It localises to the cytoplasm. The catalysed reaction is IMP + L-aspartate + GTP = N(6)-(1,2-dicarboxyethyl)-AMP + GDP + phosphate + 2 H(+). The protein operates within purine metabolism; AMP biosynthesis via de novo pathway; AMP from IMP: step 1/2. Functionally, plays an important role in the de novo pathway of purine nucleotide biosynthesis. Catalyzes the first committed step in the biosynthesis of AMP from IMP. This Archaeoglobus fulgidus (strain ATCC 49558 / DSM 4304 / JCM 9628 / NBRC 100126 / VC-16) protein is Adenylosuccinate synthetase.